Consider the following 428-residue polypeptide: Elongation factor 1-alpha (428 aa).

In terms of domain architecture, tr-type G spans 5 to 215; the sequence is KPHVNIVFIG…ALDQIPEPPK (211 aa). Residues 14–21 form a G1 region; that stretch reads GHVDHGKS. 14-21 contributes to the GTP binding site; that stretch reads GHVDHGKS. Residue Ser-21 coordinates Mg(2+). The G2 stretch occupies residues 68 to 72; the sequence is GITID. The segment at 89–92 is G3; the sequence is DAPG. GTP contacts are provided by residues 89–93 and 144–147; these read DAPGH and NKMD. Positions 144 to 147 are G4; it reads NKMD. Residues 181–183 form a G5 region; that stretch reads SAW.

It belongs to the TRAFAC class translation factor GTPase superfamily. Classic translation factor GTPase family. EF-Tu/EF-1A subfamily.

Its subcellular location is the cytoplasm. It carries out the reaction GTP + H2O = GDP + phosphate + H(+). In terms of biological role, GTP hydrolase that promotes the GTP-dependent binding of aminoacyl-tRNA to the A-site of ribosomes during protein biosynthesis. This chain is Elongation factor 1-alpha, found in Thermococcus onnurineus (strain NA1).